A 452-amino-acid chain; its full sequence is Isocitrate dehydrogenase [NADP], mitochondrial (452 aa).

A mitochondrion-targeting transit peptide spans 1–39 (MAGYLRVVRSLCRASGSRPAWAPAALTAPTSQEQPRRHY). Lysine 45, lysine 48, lysine 67, and lysine 69 each carry N6-acetyllysine. 2 positions are modified to N6-acetyllysine; alternate: lysine 80 and lysine 106. An N6-succinyllysine; alternate mark is found at lysine 80 and lysine 106. NADP(+) contacts are provided by residues 115–117 (TIT) and arginine 122. Threonine 117 lines the D-threo-isocitrate pocket. D-threo-isocitrate contacts are provided by residues 134–140 (SPNGTIR) and arginine 149. Lysine 155 bears the N6-acetyllysine mark. N6-acetyllysine; alternate is present on lysine 166. Position 166 is an N6-succinyllysine; alternate (lysine 166). Position 172 (arginine 172) interacts with D-threo-isocitrate. Residues lysine 180 and lysine 193 each carry the N6-acetyllysine; alternate modification. N6-succinyllysine; alternate is present on residues lysine 180 and lysine 193. At lysine 199 the chain carries N6-acetyllysine. The residue at position 256 (lysine 256) is an N6-acetyllysine; alternate. An N6-succinyllysine; alternate modification is found at lysine 256. An N6-acetyllysine mark is found at lysine 263, lysine 272, lysine 275, and lysine 280. At lysine 282 the chain carries N6-acetyllysine; alternate. Lysine 282 is modified (N6-succinyllysine; alternate). Aspartate 291 is a binding site for Mn(2+). Residue lysine 299 coordinates NADP(+). Residue aspartate 314 participates in Mn(2+) binding. NADP(+) is bound by residues 349–354 (GTVTRH) and asparagine 367. The residue at position 384 (lysine 384) is an N6-acetyllysine; alternate. Lysine 384 bears the N6-succinyllysine; alternate mark. An N6-acetyllysine mark is found at lysine 400, lysine 413, and lysine 442.

The protein belongs to the isocitrate and isopropylmalate dehydrogenases family. In terms of assembly, homodimer. Requires Mg(2+) as cofactor. Mn(2+) is required as a cofactor. Acetylation at Lys-413 dramatically reduces catalytic activity. Deacetylated by SIRT3.

The protein localises to the mitochondrion. It carries out the reaction D-threo-isocitrate + NADP(+) = 2-oxoglutarate + CO2 + NADPH. Its function is as follows. Plays a role in intermediary metabolism and energy production. It may tightly associate or interact with the pyruvate dehydrogenase complex. The chain is Isocitrate dehydrogenase [NADP], mitochondrial (IDH2) from Homo sapiens (Human).